Here is a 622-residue protein sequence, read N- to C-terminus: Chaperone protein HtpG (622 aa).

Residues 1-334 (MKGQETRGFQ…SNDLPLNVSR (334 aa)) are a; substrate-binding. A b region spans residues 335–550 (EILQDSRITQ…ADEMSTQMAK (216 aa)). The segment at 551-622 (LFAAAGQQAP…IRRMNQLLTA (72 aa)) is c.

It belongs to the heat shock protein 90 family. In terms of assembly, homodimer.

It localises to the cytoplasm. In terms of biological role, molecular chaperone. Has ATPase activity. The chain is Chaperone protein HtpG from Yersinia pestis.